A 743-amino-acid chain; its full sequence is Amylovoran biosynthesis protein AmsF (743 aa).

Residues 1–27 form the signal peptide; sequence MKRRELIRTAFSTIVATAALSSVSARA.

To R.meliloti ExoP.

It is found in the periplasm. It functions in the pathway glycan metabolism; exopolysaccharide biosynthesis. Involved in the biosynthesis of amylovoran which functions as a virulence factor. May be involved in the polymerization or late modification of the repeating units. The chain is Amylovoran biosynthesis protein AmsF (amsF) from Erwinia amylovora (Fire blight bacteria).